The following is a 310-amino-acid chain: Aspartate carbamoyltransferase catalytic subunit (310 aa).

Carbamoyl phosphate-binding residues include arginine 58 and threonine 59. Lysine 86 serves as a coordination point for L-aspartate. Carbamoyl phosphate contacts are provided by arginine 108, histidine 136, and glutamine 139. Residues arginine 169 and arginine 224 each coordinate L-aspartate. Glycine 265 and proline 266 together coordinate carbamoyl phosphate.

This sequence belongs to the aspartate/ornithine carbamoyltransferase superfamily. ATCase family. In terms of assembly, heterododecamer (2C3:3R2) of six catalytic PyrB chains organized as two trimers (C3), and six regulatory PyrI chains organized as three dimers (R2).

It carries out the reaction carbamoyl phosphate + L-aspartate = N-carbamoyl-L-aspartate + phosphate + H(+). It functions in the pathway pyrimidine metabolism; UMP biosynthesis via de novo pathway; (S)-dihydroorotate from bicarbonate: step 2/3. Its function is as follows. Catalyzes the condensation of carbamoyl phosphate and aspartate to form carbamoyl aspartate and inorganic phosphate, the committed step in the de novo pyrimidine nucleotide biosynthesis pathway. In Geobacter sp. (strain M21), this protein is Aspartate carbamoyltransferase catalytic subunit.